Reading from the N-terminus, the 1960-residue chain is Transcription factor 20 (1960 aa).

The segment covering 1-18 (MQSFREQSSYHGNQQSYP) has biased composition (polar residues). The segment at 1-287 (MQSFREQSSY…GSNAQAYGTQ (287 aa)) is disordered. Over residues 42-60 (GGTGGSSGSSGSGSGGGRR) the composition is skewed to gly residues. R60 carries the post-translational modification Omega-N-methylarginine. Residues 61–75 (GAAAAAAAMASETSG) are compositionally biased toward low complexity. The span at 122–131 (QGSSFGNQYG) shows a compositional bias: polar residues. Residues 164–192 (SAQYQQQASSQQQQQQVQQLRQQLYQSHQ) are compositionally biased toward low complexity. Residues 193-219 (PLPQATGQPASSSSHLQPMQRPSTLPS) show a composition bias toward polar residues. Over residues 236 to 259 (QSSASSSSSSSFPSPQRFSQSGQS) the composition is skewed to low complexity. 2 stretches are compositionally biased toward polar residues: residues 260 to 270 (YDGSYNVNAGS) and 277 to 287 (VGSNAQAYGTQ). K304 is covalently cross-linked (Glycyl lysine isopeptide (Lys-Gly) (interchain with G-Cter in SUMO2)). Disordered stretches follow at residues 305–328 (IPQG…SQHV) and 360–392 (FHQN…LMQT). Composition is skewed to low complexity over residues 306–322 (PQGT…QQQQ) and 368–388 (SNPS…TPSP). Phosphoserine is present on residues S419 and S430. Positions 476–748 (SDALTPQKKT…HGERKGRNEK (273 aa)) are disordered. Composition is skewed to polar residues over residues 497–508 (SCTNSEGSSQPE) and 537–547 (LSGQSTSSDTT). S538, S559, S574, and S583 each carry phosphoserine. K602 carries the post-translational modification N6-acetyllysine. Over residues 616 to 628 (RVEKPGGQDKGSQ) the composition is skewed to basic and acidic residues. S640 bears the Phosphoserine mark. Positions 665–677 (GNKNGDNNSNHNG) are enriched in low complexity. Residues 693–702 (TSRTEPSKSP) show a composition bias toward polar residues. Glycyl lysine isopeptide (Lys-Gly) (interchain with G-Cter in SUMO2) cross-links involve residues K710, K733, K748, K823, K832, and K844. Positions 732–748 (EKGDFTGHGERKGRNEK) are enriched in basic and acidic residues. S871 is subject to Phosphoserine. Glycyl lysine isopeptide (Lys-Gly) (interchain with G-Cter in SUMO2) cross-links involve residues K920 and K922. The tract at residues 920–1037 (KLKSQSGQIK…GDPHHMNPHM (118 aa)) is disordered. K929 is covalently cross-linked (Glycyl lysine isopeptide (Lys-Gly) (interchain with G-Cter in SUMO1); alternate). K929 participates in a covalent cross-link: Glycyl lysine isopeptide (Lys-Gly) (interchain with G-Cter in SUMO2); alternate. Over residues 936–945 (SKSQASFNNK) the composition is skewed to polar residues. Residues 946–961 (KSGDHCHPPSIKHESY) show a composition bias toward basic and acidic residues. K957 participates in a covalent cross-link: Glycyl lysine isopeptide (Lys-Gly) (interchain with G-Cter in SUMO2). 2 positions are modified to phosphoserine: S966 and S1005. A Glycyl lysine isopeptide (Lys-Gly) (interchain with G-Cter in SUMO2) cross-link involves residue K1015. The residue at position 1024 (R1024) is an Omega-N-methylarginine. Residue S1053 is modified to Phosphoserine. Glycyl lysine isopeptide (Lys-Gly) (interchain with G-Cter in SUMO2) cross-links involve residues K1086, K1098, K1137, K1173, K1178, K1183, K1210, K1231, K1267, and K1274. Disordered stretches follow at residues 1110-1142 (AAAQ…DKDG), 1162-1285 (RCLM…GRLL), and 1303-1331 (SHSQ…CPAV). The segment covering 1130–1142 (DRVRSPLKNDKDG) has biased composition (basic and acidic residues). Residues 1170–1191 (LPNKGMELKHGSQKLQESCWDL) are leucine-zipper. The Nuclear localization signal signature appears at 1254 to 1268 (RRRVRSFISPIPSKR). Residues 1304–1318 (HSQDIKSIPKRDSSK) show a composition bias toward basic and acidic residues. Residue S1305 is modified to Phosphoserine. A Glycyl lysine isopeptide (Lys-Gly) (interchain with G-Cter in SUMO2) cross-link involves residue K1309. S1335 is modified (phosphoserine). K1338 is covalently cross-linked (Glycyl lysine isopeptide (Lys-Gly) (interchain with G-Cter in SUMO2)). Position 1361 is a phosphoserine (S1361). Residues 1384–1607 (DILSLKSGPP…TKQAVPIVEP (224 aa)) are disordered. Glycyl lysine isopeptide (Lys-Gly) (interchain with G-Cter in SUMO2) cross-links involve residues K1389, K1409, K1428, and K1446. Residues 1424–1451 (LHVEKPLPRSSEEWRGSVDDKVKTETHA) are compositionally biased toward basic and acidic residues. A compositionally biased stretch (polar residues) spans 1464–1477 (MTSTTSQKPGSNQG). K1510 participates in a covalent cross-link: Glycyl lysine isopeptide (Lys-Gly) (interchain with G-Cter in SUMO2). A Phosphoserine modification is found at S1522. K1524 participates in a covalent cross-link: Glycyl lysine isopeptide (Lys-Gly) (interchain with G-Cter in SUMO2). The a.T hook DNA-binding region spans 1537–1551 (GKKKGRPIGSVNKQK). A compositionally biased stretch (pro residues) spans 1555 to 1566 (QPPPPPPQPPQI). The short motif at 1576–1600 (KPKKQRQRRERRKPGAQPRKRKTKQ) is the Nuclear localization signal element. Residues 1578-1599 (KKQRQRRERRKPGAQPRKRKTK) are compositionally biased toward basic residues. K1613 participates in a covalent cross-link: Glycyl lysine isopeptide (Lys-Gly) (interchain with G-Cter in SUMO2). 2 disordered regions span residues 1660 to 1683 (LVRG…KALP) and 1732 to 1839 (TLPK…PELE). S1669 carries the phosphoserine modification. Residues T1671, T1762, and T1764 each carry the phosphothreonine modification. Residues 1785 to 1792 (RFKRRHRS) carry the Nuclear localization signal motif. The C2HC pre-PHD-type; degenerate zinc finger occupies 1829–1865 (PTTSEGGPELELQIPELPLDSNEFWVHEGCILWANGI). The PHD-type zinc finger occupies 1885-1933 (MKCSHCQEAGATLGCYNKGCSFRYHYPCAIDADCLLHEENFSVRCPKHK). A disordered region spans residues 1939-1960 (PLPPLQNKTAKGSLSTEQSERG). The span at 1944-1960 (QNKTAKGSLSTEQSERG) shows a compositional bias: polar residues.

In terms of assembly, homodimer. Interacts with RNF4 and JUN. Expressed in most tissues, except in ovary and prostate. Isoform 1 is exclusively expressed in brain, heart and testis, and this form predominates in liver and kidney. Isoform 2 predominates in lung.

It localises to the nucleus. Its function is as follows. Transcriptional activator that binds to the regulatory region of MMP3 and thereby controls stromelysin expression. It stimulates the activity of various transcriptional activators such as JUN, SP1, PAX6 and ETS1, suggesting a function as a coactivator. In Homo sapiens (Human), this protein is Transcription factor 20 (TCF20).